We begin with the raw amino-acid sequence, 277 residues long: Probable xyloglucan endotransglucosylase/hydrolase protein 11 (277 aa).

The signal sequence occupies residues methionine 1–glycine 24. The region spanning valine 32–phenylalanine 209 is the GH16 domain. Asparagine 50 carries N-linked (GlcNAc...) asparagine glycosylation. Glutamate 107 acts as the Nucleophile in catalysis. Xyloglucan-binding positions include asparagine 123–asparagine 125 and glycine 133–aspartate 135. Asparagine 194 is a glycosylation site (N-linked (GlcNAc...) asparagine). 2 cysteine pairs are disulfide-bonded: cysteine 217/cysteine 227 and cysteine 260/cysteine 273. Arginine 265 contributes to the xyloglucan binding site.

This sequence belongs to the glycosyl hydrolase 16 family. XTH group 1 subfamily. In terms of processing, contains at least one intrachain disulfide bond essential for its enzymatic activity.

The protein localises to the secreted. The protein resides in the cell wall. It is found in the extracellular space. Its subcellular location is the apoplast. It carries out the reaction breaks a beta-(1-&gt;4) bond in the backbone of a xyloglucan and transfers the xyloglucanyl segment on to O-4 of the non-reducing terminal glucose residue of an acceptor, which can be a xyloglucan or an oligosaccharide of xyloglucan.. Functionally, may catalyze xyloglucan endohydrolysis (XEH) and/or endotransglycosylation (XET). Cleaves and religates xyloglucan polymers, an essential constituent of the primary cell wall, and thereby participates in cell wall construction of growing tissues. This is Probable xyloglucan endotransglucosylase/hydrolase protein 11 (XTH11) from Arabidopsis thaliana (Mouse-ear cress).